The sequence spans 336 residues: MLQTTNKPPLTIRLCQPRGFCAGVDRAIQIVVLALKKYGAPVYVRHEIVHNRYVVEGLQSLGAVFIEELSEIPAEHRRSPVVFSAHGVPKSVPADAQARNLFYLDATCPLVSKVHKQAMRHQRLGRHVLLIGHAGHPEVIGTMGQLPEGAVTLVETEADAARLVPADPKALGFVTQTTLSVEDTAGIIRALRERFPDLQAPAAESICYATTNRQEAVKDTAPGADLYLIVGAPNSSNSRRLVEVAERAGATMSLLVQRAAEIPWNDIGTISTLGLSAGASAPEIIVDEIIDAFRQRFDVTIDLAITATETEDFPVMRVLRDVELTPADMAFVNGAA.

Residue cysteine 21 coordinates [4Fe-4S] cluster. Histidine 50 and histidine 86 together coordinate (2E)-4-hydroxy-3-methylbut-2-enyl diphosphate. Dimethylallyl diphosphate is bound by residues histidine 50 and histidine 86. Isopentenyl diphosphate contacts are provided by histidine 50 and histidine 86. Position 108 (cysteine 108) interacts with [4Fe-4S] cluster. A (2E)-4-hydroxy-3-methylbut-2-enyl diphosphate-binding site is contributed by histidine 136. Histidine 136 is a binding site for dimethylallyl diphosphate. An isopentenyl diphosphate-binding site is contributed by histidine 136. Glutamate 138 functions as the Proton donor in the catalytic mechanism. Threonine 177 serves as a coordination point for (2E)-4-hydroxy-3-methylbut-2-enyl diphosphate. Cysteine 207 provides a ligand contact to [4Fe-4S] cluster. (2E)-4-hydroxy-3-methylbut-2-enyl diphosphate-binding residues include serine 235, serine 236, asparagine 237, and serine 280. Dimethylallyl diphosphate is bound by residues serine 235, serine 236, asparagine 237, and serine 280. Isopentenyl diphosphate-binding residues include serine 235, serine 236, asparagine 237, and serine 280.

The protein belongs to the IspH family. The cofactor is [4Fe-4S] cluster.

It catalyses the reaction isopentenyl diphosphate + 2 oxidized [2Fe-2S]-[ferredoxin] + H2O = (2E)-4-hydroxy-3-methylbut-2-enyl diphosphate + 2 reduced [2Fe-2S]-[ferredoxin] + 2 H(+). The enzyme catalyses dimethylallyl diphosphate + 2 oxidized [2Fe-2S]-[ferredoxin] + H2O = (2E)-4-hydroxy-3-methylbut-2-enyl diphosphate + 2 reduced [2Fe-2S]-[ferredoxin] + 2 H(+). It participates in isoprenoid biosynthesis; dimethylallyl diphosphate biosynthesis; dimethylallyl diphosphate from (2E)-4-hydroxy-3-methylbutenyl diphosphate: step 1/1. It functions in the pathway isoprenoid biosynthesis; isopentenyl diphosphate biosynthesis via DXP pathway; isopentenyl diphosphate from 1-deoxy-D-xylulose 5-phosphate: step 6/6. In terms of biological role, catalyzes the conversion of 1-hydroxy-2-methyl-2-(E)-butenyl 4-diphosphate (HMBPP) into a mixture of isopentenyl diphosphate (IPP) and dimethylallyl diphosphate (DMAPP). Acts in the terminal step of the DOXP/MEP pathway for isoprenoid precursor biosynthesis. This chain is 4-hydroxy-3-methylbut-2-enyl diphosphate reductase, found in Mesorhizobium japonicum (strain LMG 29417 / CECT 9101 / MAFF 303099) (Mesorhizobium loti (strain MAFF 303099)).